Reading from the N-terminus, the 578-residue chain is Acyl-coenzyme A synthetase ACSM5, mitochondrial (578 aa).

A mitochondrion-targeting transit peptide spans 1 to 22 (MRLWLRGLVYQARRSSWGVFRI). Lys96 is modified (N6-acetyllysine; alternate). An N6-succinyllysine; alternate modification is found at Lys96. Position 151 is an N6-acetyllysine (Lys151). 229-237 (TSGTTGTPK) contributes to the ATP binding site. Lys335 is subject to N6-acetyllysine. ATP-binding positions include 367 to 372 (EGYGQS), Asp454, Arg469, and Lys565.

The protein belongs to the ATP-dependent AMP-binding enzyme family. Mg(2+) serves as cofactor. It depends on Mn(2+) as a cofactor.

It is found in the mitochondrion matrix. It carries out the reaction a medium-chain fatty acid + ATP + CoA = a medium-chain fatty acyl-CoA + AMP + diphosphate. Catalyzes the activation of fatty acids by CoA to produce an acyl-CoA, the first step in fatty acid metabolism. The polypeptide is Acyl-coenzyme A synthetase ACSM5, mitochondrial (Acsm5) (Rattus norvegicus (Rat)).